The primary structure comprises 403 residues: Argininosuccinate synthase (403 aa).

ATP-binding positions include 12 to 20 and A39; that span reads AYSGGLDTS. Residues Y90 and S95 each coordinate L-citrulline. Residue G120 coordinates ATP. Residues T122, N126, and D127 each coordinate L-aspartate. N126 is a binding site for L-citrulline. The L-citrulline site is built by R130, S182, S191, E267, and Y279.

It belongs to the argininosuccinate synthase family. Type 1 subfamily. In terms of assembly, homotetramer.

The protein resides in the cytoplasm. The catalysed reaction is L-citrulline + L-aspartate + ATP = 2-(N(omega)-L-arginino)succinate + AMP + diphosphate + H(+). The protein operates within amino-acid biosynthesis; L-arginine biosynthesis; L-arginine from L-ornithine and carbamoyl phosphate: step 2/3. The polypeptide is Argininosuccinate synthase (Ruthia magnifica subsp. Calyptogena magnifica).